Consider the following 378-residue polypeptide: Acyl-coenzyme A diphosphatase NUDT19 (378 aa).

The Nudix hydrolase domain maps to 7-258 (HWREAASVLL…EIWLAPPQFY (252 aa)). Positions 105–126 (SPLPGEVAFRICAIRETFEEAG) match the Nudix box motif. Mg(2+) is bound by residues E120 and E124. Residues 376–378 (SRL) carry the Microbody targeting signal motif.

It belongs to the Nudix hydrolase family. In terms of assembly, monomer. Requires Mg(2+) as cofactor. It depends on Mn(2+) as a cofactor.

It is found in the peroxisome. The catalysed reaction is an acyl-CoA + H2O = an acyl-4'-phosphopantetheine + adenosine 3',5'-bisphosphate + 2 H(+). It carries out the reaction CoA + H2O = (R)-4'-phosphopantetheine + adenosine 3',5'-bisphosphate + 2 H(+). The enzyme catalyses hexanoyl-CoA + H2O = hexanoyl-4'-phosphopantetheine + adenosine 3',5'-bisphosphate + 2 H(+). It catalyses the reaction octanoyl-CoA + H2O = S-octanoyl-4'-phosphopantetheine + adenosine 3',5'-bisphosphate + 2 H(+). The catalysed reaction is butanoyl-CoA + H2O = S-butanoyl-4'-phosphopantetheine + adenosine 3',5'-bisphosphate + 2 H(+). It carries out the reaction propanoyl-CoA + H2O = propanoyl-4'-phosphopantetheine + adenosine 3',5'-bisphosphate + 2 H(+). The enzyme catalyses malonyl-CoA + H2O = malonyl-4'-phosphopantetheine + adenosine 3',5'-bisphosphate + 2 H(+). It catalyses the reaction succinyl-CoA + H2O = succinyl-4'-phosphopantetheine + adenosine 3',5'-bisphosphate + 2 H(+). The catalysed reaction is choloyl-CoA + H2O = S-choloyl-4'-phosphopantetheine + adenosine 3',5'-bisphosphate + 2 H(+). It carries out the reaction 4,8-dimethylnonanoyl-CoA + H2O = S-(4,8-dimethylnonanoyl)-4'-phosphopantetheine + adenosine 3',5'-bisphosphate + 2 H(+). The enzyme catalyses (9Z,12Z,15Z)-octadecatrienoyl-CoA + H2O = S-(9Z,12Z,15Z-octadecatrienoyl)-4'-phosphopantetheine + adenosine 3',5'-bisphosphate + 2 H(+). It catalyses the reaction (9Z,12Z)-octadecadienoyl-CoA + H2O = S-(9Z,12Z-octadecadienoyl)-4'-phosphopantetheine + adenosine 3',5'-bisphosphate + 2 H(+). The catalysed reaction is (9Z)-hexadecenoyl-CoA + H2O = S-(9Z-hexadecenoyl)-4'-phosphopantetheine + adenosine 3',5'-bisphosphate + 2 H(+). It carries out the reaction (9Z)-tetradecenoyl-CoA + H2O = S-(9Z-tetradecenoyl)-4'-phosphopantetheine + adenosine 3',5'-bisphosphate + 2 H(+). The enzyme catalyses (6Z)-octenoyl-CoA + H2O = S-(6Z-octenoyl)-4'-phosphopantetheine + adenosine 3',5'-bisphosphate + 2 H(+). It catalyses the reaction hexadecanoyl-CoA + H2O = S-hexadecanoyl-4'-phosphopantetheine + adenosine 3',5'-bisphosphate + 2 H(+). The catalysed reaction is tetradecanoyl-CoA + H2O = tetradecanoyl-4'-phosphopantetheine + adenosine 3',5'-bisphosphate + 2 H(+). It carries out the reaction dodecanoyl-CoA + H2O = S-dodecanoyl-4'-phosphopantetheine + adenosine 3',5'-bisphosphate + 2 H(+). The enzyme catalyses a 5'-end CoA-ribonucleoside in mRNA + H2O = a 5'-end phospho-adenosine-phospho-ribonucleoside in mRNA + (R)-4'-phosphopantetheine + 2 H(+). Fatty acyl-coenzyme A (CoA) diphosphatase that hydrolyzes fatty acyl-CoA to yield acyl-4'-phosphopantetheine and adenosine 3',5'-bisphosphate. Mediates the hydrolysis of a wide range of CoA esters, including choloyl-CoA and branched-chain fatty-acyl-CoA esters and at low substrate concentrations medium and long-chain fatty-acyl-CoA esters are the primary substrates. Highest activity seen with medium-chain acyl-CoA esters and higher rates of activity seen with the unsaturated acyl-CoA esters compared with the saturated esters. Exhibits decapping activity towards dpCoA-capped RNAs in vitro. The polypeptide is Acyl-coenzyme A diphosphatase NUDT19 (NUDT19) (Gallus gallus (Chicken)).